We begin with the raw amino-acid sequence, 226 residues long: UPF0758 protein SGO_1229 (226 aa).

Residues 103–225 (RILSSQKLAK…YYSYREETDL (123 aa)) enclose the MPN domain. Zn(2+) contacts are provided by H174, H176, and D187. The JAMM motif signature appears at 174 to 187 (HNHPSGATRPSRDD).

Belongs to the UPF0758 family.

The chain is UPF0758 protein SGO_1229 from Streptococcus gordonii (strain Challis / ATCC 35105 / BCRC 15272 / CH1 / DL1 / V288).